A 220-amino-acid chain; its full sequence is Deoxyribose-phosphate aldolase (220 aa).

The Proton donor/acceptor role is filled by D89. K151 (schiff-base intermediate with acetaldehyde) is an active-site residue. K180 serves as the catalytic Proton donor/acceptor.

Belongs to the DeoC/FbaB aldolase family. DeoC type 1 subfamily.

It is found in the cytoplasm. It catalyses the reaction 2-deoxy-D-ribose 5-phosphate = D-glyceraldehyde 3-phosphate + acetaldehyde. Its pathway is carbohydrate degradation; 2-deoxy-D-ribose 1-phosphate degradation; D-glyceraldehyde 3-phosphate and acetaldehyde from 2-deoxy-alpha-D-ribose 1-phosphate: step 2/2. Its function is as follows. Catalyzes a reversible aldol reaction between acetaldehyde and D-glyceraldehyde 3-phosphate to generate 2-deoxy-D-ribose 5-phosphate. This is Deoxyribose-phosphate aldolase from Macrococcus caseolyticus (strain JCSC5402) (Macrococcoides caseolyticum).